The sequence spans 358 residues: MSIADETVSWNQDSILSRDLFSATSAELCYENLNRSCVRSPYSPGPRLILYAVFGFGAVLAVCGNLLVMTSILHFRQLHSPANFLVASLACADFLVGVMVMPFSMVRSVEGCWYFGDSYCKLHTCFDVSFCYCSLFHLCFISVDRYIAVSDPLAYPTRFTASVSGKCITFSWLLSISYGFSLIYTGASEAGLEDLVSSLTCVGGCQIAVNQTWVFINFSVFLIPTLVMITVYSKIFLIAKQQAQNIEKMSKQTARASDSYKDRVAKRERKAAKTLGIAVAAFLLSWLPYFIDSFIDAFLGFITPTYVYEILVWIVYYNSAMNPLIYAFFYPWFRKAIKLTVTGKILRENSSTTNLFSE.

Residues 1-47 (MSIADETVSWNQDSILSRDLFSATSAELCYENLNRSCVRSPYSPGPR) are Extracellular-facing. A glycan (N-linked (GlcNAc...) asparagine) is linked at Asn-34. 2 disulfides stabilise this stretch: Cys-37/Cys-201 and Cys-120/Cys-205. A helical transmembrane segment spans residues 48–68 (LILYAVFGFGAVLAVCGNLLV). Topologically, residues 69–83 (MTSILHFRQLHSPAN) are cytoplasmic. Residues 84-104 (FLVASLACADFLVGVMVMPFS) form a helical membrane-spanning segment. Residues 105–121 (MVRSVEGCWYFGDSYCK) lie on the Extracellular side of the membrane. Residues 122-143 (LHTCFDVSFCYCSLFHLCFISV) traverse the membrane as a helical segment. Topologically, residues 144 to 166 (DRYIAVSDPLAYPTRFTASVSGK) are cytoplasmic. A helical membrane pass occupies residues 167 to 187 (CITFSWLLSISYGFSLIYTGA). Residues 188–212 (SEAGLEDLVSSLTCVGGCQIAVNQT) are Extracellular-facing. Asn-210 carries an N-linked (GlcNAc...) asparagine glycan. Residues 213–233 (WVFINFSVFLIPTLVMITVYS) form a helical membrane-spanning segment. At 234 to 274 (KIFLIAKQQAQNIEKMSKQTARASDSYKDRVAKRERKAAKT) the chain is on the cytoplasmic side. Residues 275-295 (LGIAVAAFLLSWLPYFIDSFI) form a helical membrane-spanning segment. At 296–309 (DAFLGFITPTYVYE) the chain is on the extracellular side. Residues 310–333 (ILVWIVYYNSAMNPLIYAFFYPWF) form a helical membrane-spanning segment. Over 334–358 (RKAIKLTVTGKILRENSSTTNLFSE) the chain is Cytoplasmic.

The protein belongs to the G-protein coupled receptor 1 family. In terms of tissue distribution, specifically expressed in neurons of the olfactory epithelium.

It is found in the cell membrane. In terms of biological role, olfactory receptor activated by trace amines, such as N-methylpiperidine and N,N-dimethylcyclohexylamine. Trace amine compounds are enriched in animal body fluids and act on trace amine-associated receptors (TAARs) to elicit both intraspecific and interspecific innate behaviors. Ligand-binding causes a conformation change that triggers signaling via G(s)-class of G alpha proteins (GNAL or GNAS). This Mus musculus (Mouse) protein is Trace amine-associated receptor 7f.